A 381-amino-acid chain; its full sequence is L-lactate dehydrogenase (381 aa).

Residues 1-380 (MIISASTDYR…SADSLVRELG (380 aa)) form the FMN hydroxy acid dehydrogenase domain. A substrate-binding site is contributed by Tyr24. Ser106 and Gln127 together coordinate FMN. Tyr129 is a substrate binding site. FMN is bound at residue Thr155. Position 164 (Arg164) interacts with substrate. FMN is bound at residue Lys251. Catalysis depends on His275, which acts as the Proton acceptor. A substrate-binding site is contributed by Arg278. An FMN-binding site is contributed by 306–330 (DSGIRTGLDVVRMIALGADSVLLGR).

It belongs to the FMN-dependent alpha-hydroxy acid dehydrogenase family. As to quaternary structure, homotetramer. Requires FMN as cofactor.

Its subcellular location is the cell inner membrane. The catalysed reaction is (S)-lactate + A = pyruvate + AH2. Functionally, catalyzes the conversion of L-lactate to pyruvate. Is coupled to the respiratory chain. This chain is L-lactate dehydrogenase, found in Pseudomonas aeruginosa (strain LESB58).